A 565-amino-acid polypeptide reads, in one-letter code: Thiol:disulfide interchange protein DsbD (565 aa).

The first 19 residues, Met1–Ala19, serve as a signal peptide directing secretion. Topologically, residues Gly20–Gln162 are periplasmic. 2 disulfide bridges follow: Cys122-Cys128 and Cys182-Cys304. A helical membrane pass occupies residues Leu163 to Val183. Residues Leu184–Leu207 are Cytoplasmic-facing. A helical transmembrane segment spans residues Leu208–Val228. The Periplasmic portion of the chain corresponds to Ala229–Pro242. The chain crosses the membrane as a helical span at residues Tyr243–Leu263. The Cytoplasmic segment spans residues Thr264–Thr295. The helical transmembrane segment at Ile296–Ile316 threads the bilayer. Over Ala317–Met322 the chain is Periplasmic. A helical membrane pass occupies residues Trp323–Ile343. Over Thr344–Pro356 the chain is Cytoplasmic. The helical transmembrane segment at Trp357 to Leu377 threads the bilayer. Over Glu378–Asp383 the chain is Periplasmic. A helical membrane pass occupies residues Val384–Thr404. Residues Ser405 to Gln417 are Cytoplasmic-facing. A helical membrane pass occupies residues Ile418–Ala438. The Thioredoxin domain maps to Trp434 to Pro565. Residues Thr439–Pro565 lie on the Periplasmic side of the membrane. The cysteines at positions 480 and 483 are disulfide-linked.

Belongs to the thioredoxin family. DsbD subfamily.

The protein localises to the cell inner membrane. It catalyses the reaction [protein]-dithiol + NAD(+) = [protein]-disulfide + NADH + H(+). It carries out the reaction [protein]-dithiol + NADP(+) = [protein]-disulfide + NADPH + H(+). Functionally, required to facilitate the formation of correct disulfide bonds in some periplasmic proteins and for the assembly of the periplasmic c-type cytochromes. Acts by transferring electrons from cytoplasmic thioredoxin to the periplasm. This transfer involves a cascade of disulfide bond formation and reduction steps. This chain is Thiol:disulfide interchange protein DsbD, found in Escherichia coli O157:H7.